Consider the following 455-residue polypeptide: Cysteinylglycine-S-conjugate dipeptidase (455 aa).

His92 contacts Zn(2+). Asp94 is an active-site residue. Asp125 is a Zn(2+) binding site. Residue Glu158 is the Proton acceptor of the active site. Zn(2+)-binding residues include Glu159, Glu163, and His428.

This sequence belongs to the peptidase M20F family. The cofactor is Zn(2+).

The catalysed reaction is an S-substituted L-cysteinylglycine + H2O = an S-substituted L-cysteine + glycine. It catalyses the reaction S-(1-hydroxy-3-methylhexan-3-yl)-L-cysteinylglycine + H2O = S-(1-hydroxy-3-methylhexan-3-yl)-L-cysteine + glycine. It carries out the reaction S-benzyl-L-cysteinylglycine + H2O = S-benzyl-L-cysteine + glycine. Its function is as follows. Metallopeptidase that hydrolyzes the Cys-Gly bond of Cys-Gly-S-conjugates. Involved in the formation of the human body odorant 3-methyl-3-sulfanylhexan-1-ol (3M3SH) from odorless axilla secretions. Catalyzes the hydrolysis of the Cys-Gly bond of the Cys-Gly-S-conjugate of 3M3SH, a key precursor secreted by apocrine glands in human axilla skin. The Cys-S-conjugate obtained is then cleaved by the Cys-S-conjugate beta-lyase MetC, which finally releases 3M3SH. The sequence is that of Cysteinylglycine-S-conjugate dipeptidase from Corynebacterium striatum.